The chain runs to 723 residues: Malate synthase G (723 aa).

Acetyl-CoA contacts are provided by residues Val-118, 125–126, Ser-274, and Arg-311; that span reads RY. Arg-338 functions as the Proton acceptor in the catalytic mechanism. Glyoxylate is bound by residues Arg-338, Glu-427, and 452-455; that span reads GFLD. Glu-427 and Asp-455 together coordinate Mg(2+). Position 536 (Pro-536) interacts with acetyl-CoA. At Cys-617 the chain carries Cysteine sulfenic acid (-SOH). Asp-631 acts as the Proton donor in catalysis. Position 688 is a cysteine sulfenic acid (-SOH) (Cys-688).

It belongs to the malate synthase family. GlcB subfamily. Monomer. The cofactor is Mg(2+).

It is found in the cytoplasm. It catalyses the reaction glyoxylate + acetyl-CoA + H2O = (S)-malate + CoA + H(+). The protein operates within carbohydrate metabolism; glyoxylate cycle; (S)-malate from isocitrate: step 2/2. Functionally, involved in the glycolate utilization. Catalyzes the condensation and subsequent hydrolysis of acetyl-coenzyme A (acetyl-CoA) and glyoxylate to form malate and CoA. The polypeptide is Malate synthase G (Shigella flexneri).